Here is a 304-residue protein sequence, read N- to C-terminus: Aspartate carbamoyltransferase catalytic subunit (304 aa).

Arg49 and Thr50 together coordinate carbamoyl phosphate. Lys77 lines the L-aspartate pocket. Residues Arg99, His127, and Gln130 each contribute to the carbamoyl phosphate site. L-aspartate contacts are provided by Arg160 and Arg211. Carbamoyl phosphate is bound by residues Ala250 and Pro251. Residue Ser303 is modified to Phosphoserine.

It belongs to the aspartate/ornithine carbamoyltransferase superfamily. ATCase family. Heterododecamer (2C3:3R2) of six catalytic PyrB chains organized as two trimers (C3), and six regulatory PyrI chains organized as three dimers (R2).

It catalyses the reaction carbamoyl phosphate + L-aspartate = N-carbamoyl-L-aspartate + phosphate + H(+). It participates in pyrimidine metabolism; UMP biosynthesis via de novo pathway; (S)-dihydroorotate from bicarbonate: step 2/3. In terms of biological role, catalyzes the condensation of carbamoyl phosphate and aspartate to form carbamoyl aspartate and inorganic phosphate, the committed step in the de novo pyrimidine nucleotide biosynthesis pathway. The polypeptide is Aspartate carbamoyltransferase catalytic subunit (Bacillus subtilis (strain 168)).